The following is a 585-amino-acid chain: Clathrin heavy chain linker domain-containing protein 1 (585 aa).

Residues 118–239 are a coiled coil; sequence QLEAKMRIID…DLRFRHQRLQ (122 aa).

This is Clathrin heavy chain linker domain-containing protein 1 (Clhc1) from Rattus norvegicus (Rat).